The primary structure comprises 325 residues: Serine/threonine-protein phosphatase 2A activator 1 (325 aa).

It belongs to the PTPA-type PPIase family.

The protein localises to the cytoplasm. It localises to the nucleus. The catalysed reaction is [protein]-peptidylproline (omega=180) = [protein]-peptidylproline (omega=0). Functionally, PPIases accelerate the folding of proteins. It catalyzes the cis-trans isomerization of proline imidic peptide bonds in oligopeptides. Acts as a regulatory subunit for PP2A-like phosphatases modulating their activity or substrate specificity, probably by inducing a conformational change in the catalytic subunit, a direct target of the PPIase. Can reactivate inactive phosphatase PP2A-phosphatase methylesterase complexes (PP2Ai) in presence of ATP and Mg(2+) by dissociating the inactive form from the complex. This chain is Serine/threonine-protein phosphatase 2A activator 1 (rrd1), found in Schizosaccharomyces pombe (strain 972 / ATCC 24843) (Fission yeast).